The sequence spans 258 residues: Acyl-[acyl-carrier-protein]--UDP-N-acetylglucosamine O-acyltransferase (258 aa).

This sequence belongs to the transferase hexapeptide repeat family. LpxA subfamily. As to quaternary structure, homotrimer.

The protein resides in the cytoplasm. The enzyme catalyses a (3R)-hydroxyacyl-[ACP] + UDP-N-acetyl-alpha-D-glucosamine = a UDP-3-O-[(3R)-3-hydroxyacyl]-N-acetyl-alpha-D-glucosamine + holo-[ACP]. Its pathway is glycolipid biosynthesis; lipid IV(A) biosynthesis; lipid IV(A) from (3R)-3-hydroxytetradecanoyl-[acyl-carrier-protein] and UDP-N-acetyl-alpha-D-glucosamine: step 1/6. Functionally, involved in the biosynthesis of lipid A, a phosphorylated glycolipid that anchors the lipopolysaccharide to the outer membrane of the cell. In Pseudomonas syringae pv. syringae (strain B728a), this protein is Acyl-[acyl-carrier-protein]--UDP-N-acetylglucosamine O-acyltransferase.